A 313-amino-acid polypeptide reads, in one-letter code: Ribosomal RNA small subunit methyltransferase H (313 aa).

Residues 35–37, D55, F79, D100, and Q107 each bind S-adenosyl-L-methionine; that span reads GGH.

The protein belongs to the methyltransferase superfamily. RsmH family.

It is found in the cytoplasm. The enzyme catalyses cytidine(1402) in 16S rRNA + S-adenosyl-L-methionine = N(4)-methylcytidine(1402) in 16S rRNA + S-adenosyl-L-homocysteine + H(+). Its function is as follows. Specifically methylates the N4 position of cytidine in position 1402 (C1402) of 16S rRNA. The sequence is that of Ribosomal RNA small subunit methyltransferase H from Burkholderia multivorans (strain ATCC 17616 / 249).